Reading from the N-terminus, the 139-residue chain is MKVHIVAVGKLKNGYVAEGVKDYYERIKHYIPITMVETKQENPFNMTTKEGFHIVLDAQGKLMTSEEFASFIEDLLTTQSNDVYFYIGGPEGFSEAFKNNAQMRISLSLMTFPHELARLFFLEQLYRALTIIKGEKYHK.

S-adenosyl-L-methionine contacts are provided by residues L56, G88, and 107-112 (LSLMTF).

Belongs to the RNA methyltransferase RlmH family. Homodimer.

It localises to the cytoplasm. It catalyses the reaction pseudouridine(1915) in 23S rRNA + S-adenosyl-L-methionine = N(3)-methylpseudouridine(1915) in 23S rRNA + S-adenosyl-L-homocysteine + H(+). Functionally, specifically methylates the pseudouridine at position 1915 (m3Psi1915) in 23S rRNA. The sequence is that of Ribosomal RNA large subunit methyltransferase H from Coprothermobacter proteolyticus (strain ATCC 35245 / DSM 5265 / OCM 4 / BT).